Consider the following 335-residue polypeptide: Ornithine carbamoyltransferase (335 aa).

Carbamoyl phosphate is bound by residues 57 to 60 (STRT), Arg108, and 135 to 138 (HPTQ). Residues Asn168, Asp232, and 236–237 (SM) contribute to the L-ornithine site. Residues 274 to 275 (CL) and Arg319 contribute to the carbamoyl phosphate site.

It belongs to the aspartate/ornithine carbamoyltransferase superfamily. OTCase family.

Its subcellular location is the cytoplasm. It carries out the reaction carbamoyl phosphate + L-ornithine = L-citrulline + phosphate + H(+). It functions in the pathway amino-acid degradation; L-arginine degradation via ADI pathway; carbamoyl phosphate from L-arginine: step 2/2. In terms of biological role, reversibly catalyzes the transfer of the carbamoyl group from carbamoyl phosphate (CP) to the N(epsilon) atom of ornithine (ORN) to produce L-citrulline. The sequence is that of Ornithine carbamoyltransferase from Limosilactobacillus reuteri (strain DSM 20016) (Lactobacillus reuteri).